The following is a 243-amino-acid chain: Carboxy-S-adenosyl-L-methionine synthase (243 aa).

S-adenosyl-L-methionine is bound by residues Tyr-40, 65–67 (GSS), 90–91 (DN), 118–119 (DI), Asn-133, and Arg-200.

The protein belongs to the class I-like SAM-binding methyltransferase superfamily. Cx-SAM synthase family. As to quaternary structure, homodimer.

It carries out the reaction prephenate + S-adenosyl-L-methionine = carboxy-S-adenosyl-L-methionine + 3-phenylpyruvate + H2O. In terms of biological role, catalyzes the conversion of S-adenosyl-L-methionine (SAM) to carboxy-S-adenosyl-L-methionine (Cx-SAM). The sequence is that of Carboxy-S-adenosyl-L-methionine synthase from Shewanella denitrificans (strain OS217 / ATCC BAA-1090 / DSM 15013).